The chain runs to 331 residues: Protein RecA (331 aa).

67–74 (GPESSGKT) provides a ligand contact to ATP.

Belongs to the RecA family.

The protein localises to the cytoplasm. Can catalyze the hydrolysis of ATP in the presence of single-stranded DNA, the ATP-dependent uptake of single-stranded DNA by duplex DNA, and the ATP-dependent hybridization of homologous single-stranded DNAs. It interacts with LexA causing its activation and leading to its autocatalytic cleavage. This is Protein RecA from Wigglesworthia glossinidia brevipalpis.